The following is a 430-amino-acid chain: Serine--tRNA ligase (430 aa).

237–239 (TAE) is a binding site for L-serine. 268-270 (RSE) is a binding site for ATP. Glu291 contacts L-serine. An ATP-binding site is contributed by 355-358 (EISS). Residue Ser391 coordinates L-serine.

The protein belongs to the class-II aminoacyl-tRNA synthetase family. Type-1 seryl-tRNA synthetase subfamily. Homodimer. The tRNA molecule binds across the dimer.

The protein resides in the cytoplasm. It catalyses the reaction tRNA(Ser) + L-serine + ATP = L-seryl-tRNA(Ser) + AMP + diphosphate + H(+). It carries out the reaction tRNA(Sec) + L-serine + ATP = L-seryl-tRNA(Sec) + AMP + diphosphate + H(+). Its pathway is aminoacyl-tRNA biosynthesis; selenocysteinyl-tRNA(Sec) biosynthesis; L-seryl-tRNA(Sec) from L-serine and tRNA(Sec): step 1/1. In terms of biological role, catalyzes the attachment of serine to tRNA(Ser). Is also able to aminoacylate tRNA(Sec) with serine, to form the misacylated tRNA L-seryl-tRNA(Sec), which will be further converted into selenocysteinyl-tRNA(Sec). This chain is Serine--tRNA ligase, found in Yersinia pseudotuberculosis serotype O:1b (strain IP 31758).